The sequence spans 1193 residues: Tubulin monoglutamylase TTLL4 (1193 aa).

2 disordered regions span residues 1 to 37 and 468 to 535; these read MASAGTEHYSIGLRRGNSFKQRHPSGTVSASPSEKPS and VHLD…CSSL. Positions 24-34 are enriched in polar residues; that stretch reads PSGTVSASPSE. The span at 472 to 482 shows a compositional bias: basic and acidic residues; that stretch reads QPGKEPEEAKD. Positions 502 to 515 are enriched in acidic residues; sequence EPEDTEDELGDGLE. The TTL domain occupies 599-942; the sequence is RRLLRWKMST…VLPNMEDIIS (344 aa). The residue at position 686 (Ser686) is a Phosphoserine. Residues Lys716, 722–723, 744–747, and 757–759 each bind ATP; these read RG, QRYL, and KFD. A protein is bound at residue Arg722. Residue Arg783 participates in L-glutamate binding. 804 to 805 provides a ligand contact to ATP; the sequence is TN. Residues Tyr806, Ser807, and Lys828 each coordinate L-glutamate. Residues Asp888, Glu901, and Asn903 each contribute to the Mg(2+) site. A c-MTBD region region spans residues 913–1027; that stretch reads PLDISIKGQM…RGQFERIFPS (115 aa). Lys919 provides a ligand contact to L-glutamate. Residues 943–960 are compositionally biased toward low complexity; sequence SSSSPSSSSGSSTSLPSS. Disordered stretches follow at residues 943–966 and 1092–1193; these read SSSSPSSSSGSSTSLPSSPRDKCQ and MTTS…AVSS. Polar residues-rich tracts occupy residues 1092 to 1102 and 1131 to 1153; these read MTTSKGDGTPN and SQAGLSPISRKTLSSRSNENTSK. Positions 1168–1182 are enriched in low complexity; that stretch reads SGQSSRLSAASASQS. Polar residues predominate over residues 1183–1193; sequence VTDSRLTAVSS.

The protein belongs to the tubulin--tyrosine ligase family. It depends on Mg(2+) as a cofactor. As to expression, highly expressed in testis. Expressed in brain, heart, kidney, liver, lung, muscle and spleen. In the brain, expressed in ependymal cilia, the cortex and the striatum. Expressed in blastomere.

Its subcellular location is the cytoplasm. The protein resides in the cell projection. It is found in the cilium. The protein localises to the cytoskeleton. It localises to the cilium basal body. The catalysed reaction is L-glutamyl-[protein] + L-glutamate + ATP = gamma-L-glutamyl-L-glutamyl-[protein] + ADP + phosphate + H(+). Functionally, monoglutamylase which modifies both tubulin and non-tubulin proteins, adding a single glutamate on the gamma-carboxyl group of specific glutamate residues of target proteins. Involved in the side-chain initiation step of the polyglutamylation reaction but not in the elongation step. Preferentially modifies beta-tail tubulin over the alpha-tubulin. Monoglutamylates nucleosome assembly proteins NAP1L1 and NAP1L4. Monoglutamylates nucleotidyltransferase CGAS, leading to inhibition of CGAS catalytic activity, thereby preventing antiviral defense function. Involved in KLF4 glutamylation which impedes its ubiquitination, thereby leading to somatic cell reprogramming, pluripotency maintenance and embryogenesis. The polypeptide is Tubulin monoglutamylase TTLL4 (Mus musculus (Mouse)).